Here is a 255-residue protein sequence, read N- to C-terminus: MRHPLVMGNWKLNGSKHMVNDLTAALRNELSSVVGCDVAIAPPVTYLELAKHHLGGSRIALGAQNVDTHLSGAYTGEVSAEMLKDIGAKYIIIGHSERRTYHKESDEFIAEKFAVLKEAELIPVLCIGESEAENEAGQTEAVCARQIDAVLNSLGAKAFENTVIAYEPIWAIGTGKSATPAQAQAVHKFIRDHIAKHDAAIAEQVIIQYGGSVNAANAAELFTQPDIDGALVGGASLKADAFAVIVKAAAEAKQS.

9 to 11 (NWK) is a substrate binding site. Residue His95 is the Electrophile of the active site. Catalysis depends on Glu167, which acts as the Proton acceptor. Residues Gly173, Ser212, and 233 to 234 (GG) contribute to the substrate site.

It belongs to the triosephosphate isomerase family. As to quaternary structure, homodimer.

The protein localises to the cytoplasm. The enzyme catalyses D-glyceraldehyde 3-phosphate = dihydroxyacetone phosphate. Its pathway is carbohydrate biosynthesis; gluconeogenesis. It participates in carbohydrate degradation; glycolysis; D-glyceraldehyde 3-phosphate from glycerone phosphate: step 1/1. Its function is as follows. Involved in the gluconeogenesis. Catalyzes stereospecifically the conversion of dihydroxyacetone phosphate (DHAP) to D-glyceraldehyde-3-phosphate (G3P). This chain is Triosephosphate isomerase, found in Sodalis glossinidius (strain morsitans).